A 1398-amino-acid chain; its full sequence is DNA-directed RNA polymerase subunit beta' (1398 aa).

C71, C73, C86, and C89 together coordinate Zn(2+). Mg(2+) is bound by residues D462, D464, and D466. The Zn(2+) site is built by C810, C884, C891, and C894.

This sequence belongs to the RNA polymerase beta' chain family. In terms of assembly, the RNAP catalytic core consists of 2 alpha, 1 beta, 1 beta' and 1 omega subunit. When a sigma factor is associated with the core the holoenzyme is formed, which can initiate transcription. It depends on Mg(2+) as a cofactor. Requires Zn(2+) as cofactor.

It carries out the reaction RNA(n) + a ribonucleoside 5'-triphosphate = RNA(n+1) + diphosphate. Functionally, DNA-dependent RNA polymerase catalyzes the transcription of DNA into RNA using the four ribonucleoside triphosphates as substrates. The polypeptide is DNA-directed RNA polymerase subunit beta' (Mesorhizobium japonicum (strain LMG 29417 / CECT 9101 / MAFF 303099) (Mesorhizobium loti (strain MAFF 303099))).